Reading from the N-terminus, the 781-residue chain is Mitogen-activated protein kinase 7 (781 aa).

Residues 1–27 form a disordered region; sequence MAEPLKEDDGEDGSGEPPGPVKAEPAG. At A2 the chain carries N-acetylalanine. Residues 2–77 are required for cytoplasmic targeting; sequence AEPLKEDDGE…VVSSARRRLT (76 aa). In terms of domain architecture, Protein kinase spans 55 to 347; that stretch reads YEIIETIGNG…AAAALRHPFL (293 aa). ATP is bound by residues 61–69 and K84; that span reads IGNGAYGVV. The tract at residues 78 to 139 is required for binding to MAP2K5; it reads GQQVAIKKIP…FKSVYVVLDL (62 aa). The segment at 140–406 is necessary for oligomerization; it reads MESDLHQIIH…QQIRFQPSLQ (267 aa). Catalysis depends on D182, which acts as the Proton acceptor. The TXY motif lies at 219 to 221; that stretch reads TEY. Residues 402-708 form a disordered region; it reads QPSLQPVASE…PKGSGAGYGV (307 aa). A may not be required for kinase activity; required to stimulate MEF2C activity region spans residues 407-781; that stretch reads PVASEPGCPD…LADLPDLQEP (375 aa). Composition is skewed to pro residues over residues 433–445 and 454–463; these read SPPPAPLPCPGPA and QPPPPASEPA. The span at 476–486 shows a compositional bias: low complexity; the sequence is KAALKAALLKS. Basic and acidic residues-rich tracts occupy residues 502 to 519, 527 to 544, and 563 to 573; these read PEPRKPVTAQERQREREE, RAKEREKRRQERERKERG, and DNDRSLLERWT. The short motif at 505–539 is the Nuclear localization signal element; that stretch reads RKPVTAQERQREREEKRRRRQERAKEREKRRQERE. 2 stretches are compositionally biased toward pro residues: residues 578-594 and 601-614; these read PPAPAPATARPPSPPAG and GPLPQPACPPPAPA. 2 stretches are compositionally biased toward low complexity: residues 615-632 and 642-652; these read AGPAAPQTTAASGLLAPQ and GPSALSVLPYF. Residues 653-664 show a composition bias toward pro residues; it reads PSGPPPPDPGGA. Positions 668–685 are enriched in polar residues; that stretch reads STSESPDVTLVTQQLSKS. At S685 the chain carries Phosphoserine. T698 carries the post-translational modification Phosphothreonine.

The protein belongs to the protein kinase superfamily. CMGC Ser/Thr protein kinase family. MAP kinase subfamily. Interacts with MAP2K5. Forms oligomers. Interacts with MEF2A, MEF2C and MEF2D; the interaction phosphorylates the MEF2s and enhances transcriptional activity of MEF2A, MEF2C but not MEF2D. Interacts with SGK1. Interacts with PML. Interacts (via N-terminal half) with HSP90AB1-CDC37 chaperone complex in resting cells; the interaction is MAP2K5-independent and prevents MAPK7 from ubiquitination and proteasomal degradation. Interacts with STUB1/CHIP; the interaction is enhanced in the presence of IGF1 or MAP2K5 and promotes STUB1/CHIP E3 ligase activity. Requires Mg(2+) as cofactor. Dually phosphorylated on Thr-219 and Tyr-221, which activates the enzyme.

The protein localises to the cytoplasm. It is found in the nucleus. It localises to the PML body. The catalysed reaction is L-seryl-[protein] + ATP = O-phospho-L-seryl-[protein] + ADP + H(+). The enzyme catalyses L-threonyl-[protein] + ATP = O-phospho-L-threonyl-[protein] + ADP + H(+). Activated by tyrosine and threonine phosphorylation. Activated in response to hyperosmolarity, hydrogen peroxide, and epidermal growth factor (EGF). Functionally, plays a role in various cellular processes such as proliferation, differentiation and cell survival. The upstream activator of MAPK7 is the MAPK kinase MAP2K5. Upon activation, it translocates to the nucleus and phosphorylates various downstream targets including MEF2C. EGF activates MAPK7 through a Ras-independent and MAP2K5-dependent pathway. As part of the MAPK/ERK signaling pathway, acts as a negative regulator of apoptosis in cardiomyocytes via interaction with STUB1/CHIP and promotion of STUB1-mediated ubiquitination and degradation of ICER-type isoforms of CREM. May have a role in muscle cell differentiation. May be important for endothelial function and maintenance of blood vessel integrity. MAP2K5 and MAPK7 interact specifically with one another and not with MEK1/ERK1 or MEK2/ERK2 pathways. Phosphorylates SGK1 at Ser-78 and this is required for growth factor-induced cell cycle progression. Involved in the regulation of p53/TP53 by disrupting the PML-MDM2 interaction. This chain is Mitogen-activated protein kinase 7 (MAPK7), found in Bos taurus (Bovine).